Consider the following 753-residue polypeptide: 5-methyltetrahydropteroyltriglutamate--homocysteine methyltransferase (753 aa).

Residues 17-20 (RELK) and K117 each bind 5-methyltetrahydropteroyltri-L-glutamate. Residues 431-433 (IGS) and E484 contribute to the L-homocysteine site. L-methionine contacts are provided by residues 431 to 433 (IGS) and E484. 5-methyltetrahydropteroyltri-L-glutamate contacts are provided by residues 515 to 516 (RC) and W561. D599 is a binding site for L-homocysteine. D599 contributes to the L-methionine binding site. 5-methyltetrahydropteroyltri-L-glutamate is bound at residue E605. Zn(2+) is bound by residues H641, C643, and E665. Catalysis depends on H694, which acts as the Proton donor. C726 provides a ligand contact to Zn(2+).

The protein belongs to the vitamin-B12 independent methionine synthase family. Zn(2+) serves as cofactor.

The catalysed reaction is 5-methyltetrahydropteroyltri-L-glutamate + L-homocysteine = tetrahydropteroyltri-L-glutamate + L-methionine. The protein operates within amino-acid biosynthesis; L-methionine biosynthesis via de novo pathway; L-methionine from L-homocysteine (MetE route): step 1/1. Its function is as follows. Catalyzes the transfer of a methyl group from 5-methyltetrahydrofolate to homocysteine resulting in methionine formation. In Escherichia coli O157:H7 (strain EC4115 / EHEC), this protein is 5-methyltetrahydropteroyltriglutamate--homocysteine methyltransferase.